A 284-amino-acid chain; its full sequence is NAD kinase (284 aa).

Residue Asp70 is the Proton acceptor of the active site. NAD(+)-binding positions include 70 to 71 (DG), 139 to 140 (NE), Lys167, Asp169, Leu177, 180 to 185 (TAYNLS), and Gln236.

Belongs to the NAD kinase family. The cofactor is a divalent metal cation.

The protein resides in the cytoplasm. The enzyme catalyses NAD(+) + ATP = ADP + NADP(+) + H(+). Its function is as follows. Involved in the regulation of the intracellular balance of NAD and NADP, and is a key enzyme in the biosynthesis of NADP. Catalyzes specifically the phosphorylation on 2'-hydroxyl of the adenosine moiety of NAD to yield NADP. The polypeptide is NAD kinase (Helicobacter pylori (strain ATCC 700392 / 26695) (Campylobacter pylori)).